The chain runs to 111 residues: Heavy metal-associated isoprenylated plant protein 10 (111 aa).

The 68-residue stretch at 1-68 folds into the HMA domain; the sequence is MQETVVFEWG…ICDYVDITAV (68 aa). The segment at 68 to 111 is disordered; it reads VGPEGQPAQNRNPVKKPEPKVIRGRPYPPQKKTPGKNSDECIIL. A Cysteine methyl ester modification is found at Cys-108. Cys-108 carries S-farnesyl cysteine lipidation. Residues 109 to 111 constitute a propeptide, removed in mature form; sequence IIL.

The protein belongs to the HIPP family.

In terms of biological role, probable heavy-metal-binding protein. This chain is Heavy metal-associated isoprenylated plant protein 10, found in Arabidopsis thaliana (Mouse-ear cress).